Here is a 749-residue protein sequence, read N- to C-terminus: Taperin (749 aa).

Residues 144–348 (PAAPCRRGSP…IRPSSKPDME (205 aa)) are disordered. 3 stretches are compositionally biased toward polar residues: residues 169–179 (SAATRTPTNRS), 230–239 (LQKTGSNSFT), and 250–266 (VNRS…SPTG). Position 274 is a phosphoserine (Ser274). The span at 323 to 335 (QRQWVSSATSAND) shows a compositional bias: polar residues. The segment covering 337–347 (FEIRPSSKPDM) has biased composition (basic and acidic residues). Phosphoserine is present on residues Ser401, Ser457, and Ser501. Disordered stretches follow at residues 502–586 (EEEA…TTLE), 636–673 (FEYP…SEKP), and 730–749 (LTPA…ALYF). Polar residues-rich tracts occupy residues 534–544 (ELLNRGSNTFT) and 558–570 (HLSQ…QQGA). Residues 647–668 (EEAEEEEEEEGEEDGEEEEVGP) show a composition bias toward acidic residues.

The protein belongs to the taperin family. In terms of assembly, interacts with GRXCR2; the interaction restricts TPRN to the stereocilum basal region. Interacts with actin ACTB; the interaction may stabilize stereocilia. Interacts with CLIC5. Interacts with PTPRQ. TPRN, CLIC5 and PTPQR form concentric rings at the base of stereocilia and may form a complex. Interacts with phosphatase PPP1CA; the interaction results in inhibition of PPP1CA phosphatase activity. Interacts with DNA damage response proteins XRCC6/KU70, XRCC5/KU80, PARP1, TOP1 and TOP2A; these interactions recruit TPRN to sites of DNA damage where it may play a role in DNA repair. In terms of tissue distribution, in the organ of Corti, expressed in the inner ear hair cell stereocilia and the supporting cells (at protein level). Expressed in the sensory epithelia of the organ of Corti and vestibular end organs and, to a lesser extent, in Reisner's membrane and the spiral ligament (at protein level). At postnatal day 2, expression is detected in cochlea, liver, brain, kidney, heart and lung.

Its subcellular location is the cell projection. It localises to the stereocilium. The protein localises to the microvillus. It is found in the nucleus. The protein resides in the nucleoplasm. Its subcellular location is the cytoplasm. Essential for hearing. Required for maintenance of stereocilia on both inner and outer hair cells. Necessary for the integrity of the stereociliary rootlet. May act as an actin cytoskeleton regulator involved in the regulation of actin dynamics at the pointed end in hair cells. Forms rings at the base of stereocilia and binds actin filaments in the stereocilia which may stabilize the stereocilia. Acts as a strong inhibitor of PPP1CA phosphatase activity. Recruited to sites of DNA damage and may play a role in DNA damage repair. This is Taperin (Tprn) from Mus musculus (Mouse).